The sequence spans 220 residues: 7-cyano-7-deazaguanine synthase (220 aa).

Residue 7-17 participates in ATP binding; that stretch reads LSGGMDSSITA. Residues C185, C193, C196, and C199 each coordinate Zn(2+).

Belongs to the QueC family. Zn(2+) serves as cofactor.

It carries out the reaction 7-carboxy-7-deazaguanine + NH4(+) + ATP = 7-cyano-7-deazaguanine + ADP + phosphate + H2O + H(+). Its pathway is purine metabolism; 7-cyano-7-deazaguanine biosynthesis. Catalyzes the ATP-dependent conversion of 7-carboxy-7-deazaguanine (CDG) to 7-cyano-7-deazaguanine (preQ(0)). The protein is 7-cyano-7-deazaguanine synthase of Nitratiruptor sp. (strain SB155-2).